The sequence spans 241 residues: Demethylmenaquinone methyltransferase (241 aa).

The S-adenosyl-L-methionine site is built by T73 and D92.

It belongs to the class I-like SAM-binding methyltransferase superfamily. MenG/UbiE family.

It catalyses the reaction a 2-demethylmenaquinol + S-adenosyl-L-methionine = a menaquinol + S-adenosyl-L-homocysteine + H(+). It functions in the pathway quinol/quinone metabolism; menaquinone biosynthesis; menaquinol from 1,4-dihydroxy-2-naphthoate: step 2/2. In terms of biological role, methyltransferase required for the conversion of demethylmenaquinol (DMKH2) to menaquinol (MKH2). This is Demethylmenaquinone methyltransferase from Chlorobaculum parvum (strain DSM 263 / NCIMB 8327) (Chlorobium vibrioforme subsp. thiosulfatophilum).